Here is a 468-residue protein sequence, read N- to C-terminus: Glutamate--tRNA ligase 2 (468 aa).

The short motif at 9-19 (PSPTGFLHIGG) is the 'HIGH' region element. The short motif at 238 to 242 (KLSKR) is the 'KMSKS' region element. Residue K241 coordinates ATP.

It belongs to the class-I aminoacyl-tRNA synthetase family. Glutamate--tRNA ligase type 1 subfamily. Monomer.

It is found in the cytoplasm. It carries out the reaction tRNA(Glu) + L-glutamate + ATP = L-glutamyl-tRNA(Glu) + AMP + diphosphate. Functionally, catalyzes the attachment of glutamate to tRNA(Glu) in a two-step reaction: glutamate is first activated by ATP to form Glu-AMP and then transferred to the acceptor end of tRNA(Glu). This is Glutamate--tRNA ligase 2 from Rhodospirillum rubrum (strain ATCC 11170 / ATH 1.1.1 / DSM 467 / LMG 4362 / NCIMB 8255 / S1).